A 382-amino-acid polypeptide reads, in one-letter code: tRNA-queuosine alpha-mannosyltransferase (382 aa).

This sequence belongs to the glycosyltransferase group 1 family. Glycosyltransferase 4 subfamily.

The protein resides in the cytoplasm. It is found in the nucleus. It carries out the reaction queuosine(34) in tRNA(Asp) + GDP-alpha-D-mannose = O-4''-alpha-D-mannosylqueuosine(34) in tRNA(Asp) + GDP + H(+). Functionally, glycosyltransferase that specifically catalyzes mannosylation of cytoplasmic tRNA(Asp) modified with queuosine at position 34 (queuosine(34)). Mannosylates the cyclopentene moiety of queuosine(34) in tRNA(Asp) to form mannosyl-queuosine(34). Mannosylation of queuosine(34) in tRNA(Asp) is required to slow-down elongation at cognate codons, GAC and GAU, thereby regulating protein translation. This Gallus gallus (Chicken) protein is tRNA-queuosine alpha-mannosyltransferase (GTDC1).